The primary structure comprises 98 residues: MEIKVTEIRENKLLGRKEIYFDVLHEGEPTPSREAVKGKLVAMLDLDPNTTVIQYIRSYFGSNVSKGYAKAYETRERMLYIEPEYILVRDGLVQKQEE.

The protein belongs to the eukaryotic ribosomal protein eS24 family. Part of the 30S ribosomal subunit.

The sequence is that of Small ribosomal subunit protein eS24 from Thermococcus kodakarensis (strain ATCC BAA-918 / JCM 12380 / KOD1) (Pyrococcus kodakaraensis (strain KOD1)).